Reading from the N-terminus, the 257-residue chain is UPF0246 protein Ping_3037 (257 aa).

This sequence belongs to the UPF0246 family.

This is UPF0246 protein Ping_3037 from Psychromonas ingrahamii (strain DSM 17664 / CCUG 51855 / 37).